A 238-amino-acid polypeptide reads, in one-letter code: Pre-protein VI (238 aa).

The propeptide occupies 1-33; it reads MDAVNFSILAPRYGSHPMMSAWSGIGTSDMNGG. The segment at 34 to 54 is amphipathic alpha-helix essential for membrane lytic activity; the sequence is AFNWGGIWSGIKNFGSNVKNW. The segment at 36-53 is involved in endosomal membrane lysis; the sequence is NWGGIWSGIKNFGSNVKN. The segment at 48-74 is interaction with hexon protein; that stretch reads GSNVKNWGSRAWNSQTGKLLRQKLNDT. The Nuclear export signal motif lies at 67 to 76; it reads LRQKLNDTKV. Positions 153 to 156 match the PPXY motif motif; sequence PPSY. The tract at residues 187–212 is disordered; sequence TLELKPSDQPPPYSPQSSNMPVTAPV. A Nuclear export signal motif is present at residues 219–230; that stretch reads GTLANIVGVGLS. An interaction with hexon protein region spans residues 221 to 227; it reads LANIVGV. Residues 228 to 238 form a binds to importin alpha/beta, involved in hexon nuclear import region; it reads GLSNVKRRRCF. A Nuclear localization signal motif is present at residues 233 to 236; the sequence is KRRR.

The protein belongs to the adenoviridae protein VI family. In terms of assembly, interacts with hexon protein; this interaction allows nuclear import of hexon trimers and possibly pre-capsid assembly. Interacts (via C-terminal NLS) with importin alpha/beta. Interacts (via PPxY motif) with host NEDD4 ubiquitine ligase; this interaction might play a role in virus intracellular transport during entry. Part of a complex composed of the core-capsid bridging protein, the endosome lysis protein VI and the hexon-linking protein VIII; these interactions bridge the virus core to the capsid. Interacts with peripentonal hexons; this interaction stabilizes the capsid by gluing two peripentonal hexons together and joining them with an adjacent group-of-nine hexon. As to quaternary structure, heterodimer with the viral protease; disulfide-linked. Interacts with the viral protease. In terms of processing, ubiquitinated by Nedd4 following partial capsid disassembly; which might play a role in intracellular virus movement during entry. Post-translationally, contains the major nuclear import and export signals. Proteolytically removed during virion maturation. The processing of the C-terminus turns the precursor into a mature viral structural protein and abrogates its ability to promote hexon import and act as a potential chaperone protein.

It is found in the host nucleus. Its subcellular location is the host cytoplasm. The protein resides in the virion. Its function is as follows. During virus assembly, promotes hexon trimers nuclear import through nuclear pore complexes via an importin alpha/beta-dependent mechanism. By analogy to herpesviruses capsid assembly, might act as a chaperone to promote the formation of the icosahedral capsid. In terms of biological role, structural component of the virion that provides increased stability to the particle shell through its interaction with the core-capsid bridging protein and the hexon-linking protein VIII. Fibers shedding during virus entry into host cell allows the endosome lysis protein to be exposed as a membrane-lytic peptide. Exhibits pH-independent membrane fragmentation activity and probably mediates viral rapid escape from host endosome via organellar membrane lysis. It is not clear if it then remains partially associated with the capsid and involved in the intracellular microtubule-dependent transport of capsid to the nucleus, or if it is lost during endosomal penetration. Functionally, cofactor that activates the viral protease. Binds to viral protease in a 1:1 ratio. This chain is Pre-protein VI, found in Canis lupus familiaris (Dog).